The following is a 947-amino-acid chain: Bifunctional glutamine synthetase adenylyltransferase/adenylyl-removing enzyme (947 aa).

The tract at residues 1–440 is adenylyl removase; it reads MTPLSSPLSQ…VFNELIGDDE (440 aa). The segment at 450–947 is adenylyl transferase; the sequence is SEPWREVWQD…ASWRKWLVAV (498 aa).

The protein belongs to the GlnE family. Mg(2+) is required as a cofactor.

It catalyses the reaction [glutamine synthetase]-O(4)-(5'-adenylyl)-L-tyrosine + phosphate = [glutamine synthetase]-L-tyrosine + ADP. The enzyme catalyses [glutamine synthetase]-L-tyrosine + ATP = [glutamine synthetase]-O(4)-(5'-adenylyl)-L-tyrosine + diphosphate. In terms of biological role, involved in the regulation of glutamine synthetase GlnA, a key enzyme in the process to assimilate ammonia. When cellular nitrogen levels are high, the C-terminal adenylyl transferase (AT) inactivates GlnA by covalent transfer of an adenylyl group from ATP to specific tyrosine residue of GlnA, thus reducing its activity. Conversely, when nitrogen levels are low, the N-terminal adenylyl removase (AR) activates GlnA by removing the adenylyl group by phosphorolysis, increasing its activity. The regulatory region of GlnE binds the signal transduction protein PII (GlnB) which indicates the nitrogen status of the cell. The polypeptide is Bifunctional glutamine synthetase adenylyltransferase/adenylyl-removing enzyme (Salmonella paratyphi C (strain RKS4594)).